Here is a 1262-residue protein sequence, read N- to C-terminus: Isoleucine--tRNA ligase, cytoplasmic (1262 aa).

The residue at position 1 (M1) is an N-acetylmethionine. The short motif at 48–58 (PFATGLPHYGH) is the 'HIGH' region element. The 'KMSKS' region motif lies at 600 to 604 (KMSKR). K603 is a binding site for ATP. A Phosphoserine modification is found at S1049. The residue at position 1058 (T1058) is a Phosphothreonine.

It belongs to the class-I aminoacyl-tRNA synthetase family. Part of a multisubunit complex that groups tRNA ligases for Arg (RARS1), Asp (DARS1), Gln (QARS1), Ile (IARS1), Leu (LARS1), Lys (KARS1), Met (MARS1) the bifunctional ligase for Glu and Pro (EPRS1) and the auxiliary subunits AIMP1/p43, AIMP2/p38 and EEF1E1/p18.

Its subcellular location is the cytoplasm. It is found in the cytosol. The enzyme catalyses tRNA(Ile) + L-isoleucine + ATP = L-isoleucyl-tRNA(Ile) + AMP + diphosphate. In terms of biological role, catalyzes the specific attachment of an amino acid to its cognate tRNA in a 2 step reaction: the amino acid (AA) is first activated by ATP to form AA-AMP and then transferred to the acceptor end of the tRNA. The chain is Isoleucine--tRNA ligase, cytoplasmic (Iars1) from Mus musculus (Mouse).